Reading from the N-terminus, the 120-residue chain is Large ribosomal subunit protein eL18 (120 aa).

The protein belongs to the eukaryotic ribosomal protein eL18 family. As to quaternary structure, part of the 50S ribosomal subunit.

This chain is Large ribosomal subunit protein eL18, found in Pyrococcus furiosus (strain ATCC 43587 / DSM 3638 / JCM 8422 / Vc1).